The primary structure comprises 495 residues: Phosphomethylpyrimidine synthase (495 aa).

Substrate-binding positions include Asn-125, Met-154, Tyr-183, His-219, 239-241 (SRG), 280-283 (DGLR), and Glu-319. His-323 contributes to the Zn(2+) binding site. Tyr-346 contributes to the substrate binding site. His-387 is a Zn(2+) binding site. Positions 467, 470, and 475 each coordinate [4Fe-4S] cluster.

Belongs to the ThiC family. Requires [4Fe-4S] cluster as cofactor.

The catalysed reaction is 5-amino-1-(5-phospho-beta-D-ribosyl)imidazole + S-adenosyl-L-methionine = 4-amino-2-methyl-5-(phosphooxymethyl)pyrimidine + CO + 5'-deoxyadenosine + formate + L-methionine + 3 H(+). It participates in cofactor biosynthesis; thiamine diphosphate biosynthesis. Catalyzes the synthesis of the hydroxymethylpyrimidine phosphate (HMP-P) moiety of thiamine from aminoimidazole ribotide (AIR) in a radical S-adenosyl-L-methionine (SAM)-dependent reaction. The sequence is that of Phosphomethylpyrimidine synthase from Leptospira interrogans serogroup Icterohaemorrhagiae serovar Lai (strain 56601).